A 521-amino-acid polypeptide reads, in one-letter code: Cyclic AMP-responsive element-binding protein 3-like protein 2 (521 aa).

Topologically, residues 1-378 (MEVLESGEQS…CKLAGTQTGT (378 aa)) are cytoplasmic. Over residues 83-103 (YSLSEEPRTQSPFTHAATSDS) the composition is skewed to polar residues. The segment at 83–106 (YSLSEEPRTQSPFTHAATSDSFND) is disordered. Ser-93 carries the phosphoserine modification. Residue Lys-178 forms a Glycyl lysine isopeptide (Lys-Gly) (interchain with G-Cter in SUMO2) linkage. Phosphoserine is present on Ser-191. A disordered region spans residues 196–264 (SVDQLHLPPT…PHKLQGSGPL (69 aa)). Over residues 208 to 220 (SSHSSDSEGSLSP) the composition is skewed to low complexity. Residues 294-357 (ALKKIRRKIK…RTLLQQLQKL (64 aa)) form the bZIP domain. The interval 296–325 (KKIRRKIKNKISAQESRRKKKEYMDSLEKK) is basic motif. Residues 336–357 (LRKKVEVLENTNRTLLQQLQKL) are leucine-zipper. A helical; Signal-anchor for type II membrane protein membrane pass occupies residues 379 to 399 (CLMVVVLCFAVAFGSFFQGYG). Residues 400–521 (PYPSATKMAL…ELERRVNATF (122 aa)) are Lumenal-facing. The S1P recognition motif lies at 427–430 (RNLL). Asn-481, Asn-505, and Asn-518 each carry an N-linked (GlcNAc...) asparagine glycan.

It belongs to the bZIP family. ATF subfamily. Binds DNA as a dimer. In terms of processing, upon ER stress, translocated to the Golgi apparatus, where it is processed by regulated intramembrane proteolysis (RIP) to release the cytosol-facing N-terminal transcription factor domain. The cleavage is performed sequentially by site-1 and site-2 proteases (S1P/MBTPS1 and S2P/MBTPS2). Post-translationally, N-glycosylated. Ubiquitinated by HRD1/SYVN1; undergoes 'Lys-48'-linked ubiquitination, followed by rapid proteasomal degradation under normal conditions. Upon ER stress, SYVN1 E3 ubiquitin-protein ligase dissociates from its substrate, ubiquitination does not occur and CREB3L2 is stabilized. In terms of tissue distribution, widely expressed, including in lung, bladder, ovary, testis and spleen. Highly expressed in chondrocytes.

The protein resides in the endoplasmic reticulum membrane. The protein localises to the nucleus. In terms of biological role, transcription factor involved in unfolded protein response (UPR). In the absence of endoplasmic reticulum (ER) stress, inserted into ER membranes, with N-terminal DNA-binding and transcription activation domains oriented toward the cytosolic face of the membrane. In response to ER stress, transported to the Golgi, where it is cleaved in a site-specific manner by resident proteases S1P/MBTPS1 and S2P/MBTPS2. The released N-terminal cytosolic domain is translocated to the nucleus to effect transcription of specific target genes. Plays a critical role in chondrogenesis by activating the transcription of SEC23A, which promotes the transport and secretion of cartilage matrix proteins, and possibly that of ER biogenesis-related genes. In a neuroblastoma cell line, protects cells from ER stress-induced death. In vitro activates transcription of target genes via direct binding to the CRE site. This Mus musculus (Mouse) protein is Cyclic AMP-responsive element-binding protein 3-like protein 2 (Creb3l2).